The sequence spans 331 residues: 6-phosphogluconolactonase (331 aa).

Belongs to the cycloisomerase 2 family.

The catalysed reaction is 6-phospho-D-glucono-1,5-lactone + H2O = 6-phospho-D-gluconate + H(+). It participates in carbohydrate degradation; pentose phosphate pathway; D-ribulose 5-phosphate from D-glucose 6-phosphate (oxidative stage): step 2/3. In terms of biological role, catalyzes the hydrolysis of 6-phosphogluconolactone to 6-phosphogluconate. This Salmonella gallinarum (strain 287/91 / NCTC 13346) protein is 6-phosphogluconolactonase.